Here is a 677-residue protein sequence, read N- to C-terminus: Beta-galactosidase (677 aa).

Residues Met1–Gly23 form the signal peptide. A propeptide spanning residues Leu24–Thr28 is cleaved from the precursor. Asn26 is a glycosylation site (N-linked (GlcNAc...) asparagine). Substrate-binding residues include Tyr83, Glu129, and Asn187. The active-site Proton donor is the Glu188. Cys195 and Cys230 are oxidised to a cystine. N-linked (GlcNAc...) asparagine glycosylation occurs at Asn247. Glu268 serves as the catalytic Nucleophile. A substrate-binding site is contributed by Tyr333. Asn464, Asn498, Asn542, Asn545, and Asn555 each carry an N-linked (GlcNAc...) asparagine glycan. A disulfide bridge links Cys626 with Cys634. The interval Tyr650–Val677 is disordered. Basic and acidic residues-rich tracts occupy residues His652–Leu661 and Lys668–Val677.

The protein belongs to the glycosyl hydrolase 35 family. Homodimer. May form higher multimers. As to expression, detected in placenta (at protein level). Detected in fibroblasts and testis.

It is found in the lysosome. The protein localises to the cytoplasm. It localises to the perinuclear region. It carries out the reaction Hydrolysis of terminal non-reducing beta-D-galactose residues in beta-D-galactosides.. Cleaves beta-linked terminal galactosyl residues from gangliosides, glycoproteins, and glycosaminoglycans. In terms of biological role, has no beta-galactosidase catalytic activity, but plays functional roles in the formation of extracellular elastic fibers (elastogenesis) and in the development of connective tissue. Seems to be identical to the elastin-binding protein (EBP), a major component of the non-integrin cell surface receptor expressed on fibroblasts, smooth muscle cells, chondroblasts, leukocytes, and certain cancer cell types. In elastin producing cells, associates with tropoelastin intracellularly and functions as a recycling molecular chaperone which facilitates the secretions of tropoelastin and its assembly into elastic fibers. This Homo sapiens (Human) protein is Beta-galactosidase (GLB1).